The following is a 129-amino-acid chain: MDSRKAMLILGLLAMVLLISSEVSARELTEEVVEKSDEVNDAKYGGYGRGGGYHNGGGYHNGGGGYNGGGGYHNGGGGYNGGGGYHNGGGGYHNGGGGYNGGGGYHNGGGGYHGGGGHGGHGGASNNGN.

A signal peptide spans 1–25; the sequence is MDSRKAMLILGLLAMVLLISSEVSA. Positions 110–129 are disordered; that stretch reads GGYHGGGGHGGHGGASNNGN.

It belongs to the DRM1/ARP family. Expressed in axilary buds. Detected in growing stems, leaflets and floral organs, but not in roots.

The polypeptide is Dormancy-associated protein 2 (Pisum sativum (Garden pea)).